The sequence spans 369 residues: Maltose/maltodextrin import ATP-binding protein MalK (369 aa).

One can recognise an ABC transporter domain in the interval 4 to 234 (VTLHNVSKAY…PVNRFVASFI (231 aa)). An ATP-binding site is contributed by 36–43 (GPSGCGKS).

The protein belongs to the ABC transporter superfamily. Maltooligosaccharide importer (TC 3.A.1.1.1) family. The complex is composed of two ATP-binding proteins (MalK), two transmembrane proteins (MalG and MalK) and a solute-binding protein (MalE).

The protein resides in the cell inner membrane. It carries out the reaction D-maltose(out) + ATP + H2O = D-maltose(in) + ADP + phosphate + H(+). In terms of biological role, part of the ABC transporter complex MalEFGK involved in maltose/maltodextrin import. Responsible for energy coupling to the transport system. This Photorhabdus laumondii subsp. laumondii (strain DSM 15139 / CIP 105565 / TT01) (Photorhabdus luminescens subsp. laumondii) protein is Maltose/maltodextrin import ATP-binding protein MalK.